The primary structure comprises 342 residues: tRNA N6-adenosine threonylcarbamoyltransferase (342 aa).

2 residues coordinate Fe cation: His111 and His115. Residues Leu134–Gly138, Asp167, Gly180, and Asn276 each bind substrate. A Fe cation-binding site is contributed by Asp304.

This sequence belongs to the KAE1 / TsaD family. The cofactor is Fe(2+).

The protein resides in the cytoplasm. It carries out the reaction L-threonylcarbamoyladenylate + adenosine(37) in tRNA = N(6)-L-threonylcarbamoyladenosine(37) in tRNA + AMP + H(+). In terms of biological role, required for the formation of a threonylcarbamoyl group on adenosine at position 37 (t(6)A37) in tRNAs that read codons beginning with adenine. Is involved in the transfer of the threonylcarbamoyl moiety of threonylcarbamoyl-AMP (TC-AMP) to the N6 group of A37, together with TsaE and TsaB. TsaD likely plays a direct catalytic role in this reaction. This is tRNA N6-adenosine threonylcarbamoyltransferase from Helicobacter acinonychis (strain Sheeba).